A 321-amino-acid polypeptide reads, in one-letter code: NADPH-dependent D-xylose reductase (321 aa).

Residue Tyr50 is the Proton donor of the active site. His112 is a substrate binding site. NADP(+) is bound by residues Ser167–Asn168, Ser216–Glu225, and Lys272–Asn282.

Belongs to the aldo/keto reductase family.

The enzyme catalyses xylitol + NAD(+) = D-xylose + NADH + H(+). It carries out the reaction xylitol + NADP(+) = D-xylose + NADPH + H(+). It participates in carbohydrate metabolism; D-xylose degradation. In terms of biological role, reduces D-xylose into xylitol. Preferentially utilizes NADPH as a cosubstrate. This is NADPH-dependent D-xylose reductase (XYL1) from Candida boidinii (Yeast).